The following is a 120-amino-acid chain: Fumarate reductase subunit D (120 aa).

The next 3 helical transmembrane spans lie at 25-45 (FAML…LGVI), 55-75 (VAGF…ISMP), and 100-120 (IACY…IFMI).

Belongs to the FrdD family. In terms of assembly, part of an enzyme complex containing four subunits: a flavoprotein (FrdA), an iron-sulfur protein (FrdB), and two hydrophobic anchor proteins (FrdC and FrdD).

It localises to the cell inner membrane. Its function is as follows. Anchors the catalytic components of the fumarate reductase complex to the cell membrane, binds quinones. This chain is Fumarate reductase subunit D, found in Aliivibrio fischeri (strain MJ11) (Vibrio fischeri).